We begin with the raw amino-acid sequence, 111 residues long: Cytochrome c (111 aa).

Ala-1 is subject to N-acetylalanine. Residues Cys-22, Cys-25, and His-26 each coordinate heme c. The residue at position 80 (Lys-80) is an N6,N6,N6-trimethyllysine. A heme c-binding site is contributed by Met-88. N6,N6,N6-trimethyllysine is present on Lys-94.

The protein belongs to the cytochrome c family. Binds 1 heme c group covalently per subunit.

It localises to the mitochondrion intermembrane space. Electron carrier protein. The oxidized form of the cytochrome c heme group can accept an electron from the heme group of the cytochrome c1 subunit of cytochrome reductase. Cytochrome c then transfers this electron to the cytochrome oxidase complex, the final protein carrier in the mitochondrial electron-transport chain. The sequence is that of Cytochrome c from Vigna radiata var. radiata (Mung bean).